We begin with the raw amino-acid sequence, 164 residues long: Ribonuclease H (164 aa).

Residues aspartate 9 to aspartate 150 enclose the RNase H type-1 domain. Mg(2+) is bound by residues aspartate 18, glutamate 56, aspartate 78, and aspartate 142.

Belongs to the RNase H family. Monomer. It depends on Mg(2+) as a cofactor.

The protein localises to the cytoplasm. The catalysed reaction is Endonucleolytic cleavage to 5'-phosphomonoester.. In terms of biological role, endonuclease that specifically degrades the RNA of RNA-DNA hybrids. This chain is Ribonuclease H, found in Chromohalobacter salexigens (strain ATCC BAA-138 / DSM 3043 / CIP 106854 / NCIMB 13768 / 1H11).